Reading from the N-terminus, the 249-residue chain is Probable transcriptional regulatory protein Sare_1779 (249 aa).

This sequence belongs to the TACO1 family.

It is found in the cytoplasm. The polypeptide is Probable transcriptional regulatory protein Sare_1779 (Salinispora arenicola (strain CNS-205)).